Reading from the N-terminus, the 616-residue chain is Matrix metalloproteinase-21 (616 aa).

Positions 1 to 22 (MPTAPALGALLLLLGALTPGHQ) are cleaved as a signal peptide. The propeptide occupies 23-192 (EKLFHSRDHS…TSTSKIRKKR (170 aa)). The Cysteine switch motif lies at 139 to 146 (PRCGVPDN). Cys141 is a Zn(2+) binding site. Residues 157 to 186 (SNSNNVTEKASGKSLNTTTNQNPENGTSTS) form a disordered region. N-linked (GlcNAc...) asparagine glycosylation is found at Asn161, Asn172, and Asn181. Position 329 (His329) interacts with Zn(2+). The active site involves Glu330. Residues His333 and His339 each coordinate Zn(2+). A disulfide bridge links Cys375 with Cys606. Hemopexin repeat units follow at residues 376–435 (EGSF…WHGI), 437–493 (AEGI…FPKI), 494–542 (PSPI…FPAV), and 549–605 (FGNI…WTDI). N-linked (GlcNAc...) asparagine glycosylation is present at Asn418. The N-linked (GlcNAc...) asparagine glycan is linked to Asn597.

It belongs to the peptidase M10A family. Requires Zn(2+) as cofactor. Ca(2+) serves as cofactor. Post-translationally, the precursor is cleaved by a furin endopeptidase.

It is found in the secreted. Its function is as follows. May play a role in gastrulation-related cell movement. Plays a specialized role in the generation of left-right asymmetry during embryogenesis. May act as a negative regulator of the NOTCH-signaling pathway. The protein is Matrix metalloproteinase-21 (MMP21) of Cynops pyrrhogaster (Japanese fire-bellied newt).